The primary structure comprises 72 residues: MAKEDAIEVDGVVQEALPNAMFRVELQNGHEVLAHISGKMRKFYIRILPGDRVKVELSPYDLKRGRITYRMK.

Residues 1-72 (MAKEDAIEVD…KRGRITYRMK (72 aa)) form the S1-like domain.

It belongs to the IF-1 family. In terms of assembly, component of the 30S ribosomal translation pre-initiation complex which assembles on the 30S ribosome in the order IF-2 and IF-3, IF-1 and N-formylmethionyl-tRNA(fMet); mRNA recruitment can occur at any time during PIC assembly.

Its subcellular location is the cytoplasm. Its function is as follows. One of the essential components for the initiation of protein synthesis. Stabilizes the binding of IF-2 and IF-3 on the 30S subunit to which N-formylmethionyl-tRNA(fMet) subsequently binds. Helps modulate mRNA selection, yielding the 30S pre-initiation complex (PIC). Upon addition of the 50S ribosomal subunit IF-1, IF-2 and IF-3 are released leaving the mature 70S translation initiation complex. The protein is Translation initiation factor IF-1 2 of Nitratidesulfovibrio vulgaris (strain DP4) (Desulfovibrio vulgaris).